We begin with the raw amino-acid sequence, 438 residues long: UDP-N-acetyl-D-mannosamine dehydrogenase (438 aa).

Residues Y21, I22, D41, R46, T93, and T131 each contribute to the NAD(+) site. Positions 160, 161, 212, 216, 219, 250, 252, and 263 each coordinate UDP-N-acetyl-alpha-D-mannosaminouronate. Residue K212 is the Proton donor/acceptor of the active site. The active-site Nucleophile is the C266. UDP-N-acetyl-alpha-D-mannosaminouronate contacts are provided by Y323 and K324. An NAD(+)-binding site is contributed by R331. Residue K409 coordinates UDP-N-acetyl-alpha-D-mannosaminouronate.

This sequence belongs to the UDP-glucose/GDP-mannose dehydrogenase family. Homotetramer; probably dimer of dimers.

The catalysed reaction is UDP-N-acetyl-alpha-D-mannosamine + 2 NAD(+) + H2O = UDP-N-acetyl-alpha-D-mannosaminouronate + 2 NADH + 3 H(+). In terms of biological role, catalyzes the four-electron oxidation of UDP-N-acetyl-D-mannosamine (UDP-ManNAc), reducing NAD(+) and releasing UDP-N-acetylmannosaminuronic acid (UDP-ManNAcA). This chain is UDP-N-acetyl-D-mannosamine dehydrogenase (wecC), found in Methanococcus aeolicus (strain ATCC BAA-1280 / DSM 17508 / OCM 812 / Nankai-3).